The sequence spans 57 residues: Large ribosomal subunit protein bL33 (57 aa).

This sequence belongs to the bacterial ribosomal protein bL33 family.

The chain is Large ribosomal subunit protein bL33 from Shewanella pealeana (strain ATCC 700345 / ANG-SQ1).